Here is a 63-residue protein sequence, read N- to C-terminus: DNA-directed RNA polymerase 7 kDa subunit (63 aa).

Belongs to the poxviridae DNA-directed RNA polymerase 7 kDa subunit family. The DNA-dependent RNA polymerase used for intermediate and late genes expression consists of eight subunits 147 kDa, 133 kDa, 35 kDa, 30 kDa, 22 kDa, 19 kDa, 18 kDa and 7 kDa totalling more than 500 kDa in mass. The same holoenzyme, with the addition of the transcription-specificity factor RAP94, is used for early gene expression.

Its subcellular location is the virion. The enzyme catalyses RNA(n) + a ribonucleoside 5'-triphosphate = RNA(n+1) + diphosphate. Part of the DNA-dependent RNA polymerase which catalyzes the transcription of viral DNA into RNA using the four ribonucleoside triphosphates as substrates. Responsible for the transcription of early, intermediate and late genes. DNA-dependent RNA polymerase associates with the early transcription factor (ETF) thereby allowing the early genes transcription. Late transcription, and probably also intermediate transcription, require newly synthesized RNA polymerase. The sequence is that of DNA-directed RNA polymerase 7 kDa subunit (RPO7) from Rabbit fibroma virus (strain Kasza) (RFV).